Here is a 114-residue protein sequence, read N- to C-terminus: Large ribosomal subunit protein bL17 (114 aa).

The protein belongs to the bacterial ribosomal protein bL17 family. As to quaternary structure, part of the 50S ribosomal subunit. Contacts protein L32.

The protein is Large ribosomal subunit protein bL17 of Elusimicrobium minutum (strain Pei191).